The following is a 98-amino-acid chain: Acylphosphatase (98 aa).

The region spanning 12–98 (RLSAWVHGHV…DATMTGFSER (87 aa)) is the Acylphosphatase-like domain. Active-site residues include R27 and N45.

It belongs to the acylphosphatase family.

The enzyme catalyses an acyl phosphate + H2O = a carboxylate + phosphate + H(+). The sequence is that of Acylphosphatase (acyP) from Mycolicibacterium smegmatis (strain ATCC 700084 / mc(2)155) (Mycobacterium smegmatis).